Consider the following 101-residue polypeptide: Small ribosomal subunit protein uS14c (101 aa).

This sequence belongs to the universal ribosomal protein uS14 family. Part of the 30S ribosomal subunit.

It localises to the plastid. Functionally, binds 16S rRNA, required for the assembly of 30S particles. This Helicosporidium sp. subsp. Simulium jonesii (Green alga) protein is Small ribosomal subunit protein uS14c.